A 319-amino-acid polypeptide reads, in one-letter code: Acetyl esterase (319 aa).

The Involved in the stabilization of the negatively charged intermediate by the formation of the oxyanion hole signature appears at 91–93 (HGG). Active-site residues include serine 165, aspartate 262, and histidine 292.

Belongs to the 'GDXG' lipolytic enzyme family. As to quaternary structure, homodimer. Interacts with MalT and MelA.

Its subcellular location is the cytoplasm. Functionally, displays esterase activity towards short chain fatty esters (acyl chain length of up to 8 carbons). Able to hydrolyze triacetylglycerol (triacetin) and tributyrylglycerol (tributyrin), but not trioleylglycerol (triolein) or cholesterol oleate. Negatively regulates MalT activity by antagonizing maltotriose binding. Inhibits MelA galactosidase activity. This chain is Acetyl esterase, found in Escherichia coli O127:H6 (strain E2348/69 / EPEC).